Reading from the N-terminus, the 555-residue chain is Formate--tetrahydrofolate ligase (555 aa).

65–72 (TPAGEGKT) contacts ATP.

This sequence belongs to the formate--tetrahydrofolate ligase family.

The catalysed reaction is (6S)-5,6,7,8-tetrahydrofolate + formate + ATP = (6R)-10-formyltetrahydrofolate + ADP + phosphate. It functions in the pathway one-carbon metabolism; tetrahydrofolate interconversion. The polypeptide is Formate--tetrahydrofolate ligase (Syntrophomonas wolfei subsp. wolfei (strain DSM 2245B / Goettingen)).